Here is a 276-residue protein sequence, read N- to C-terminus: Dermonecrotic toxin LlSicTox-alphaIV2iii (276 aa).

The active site involves His-5. Mg(2+) contacts are provided by Glu-25 and Asp-27. The active-site Nucleophile is the His-41. Disulfide bonds link Cys-45/Cys-51 and Cys-47/Cys-193. Asp-85 provides a ligand contact to Mg(2+).

Belongs to the arthropod phospholipase D family. Class II subfamily. Requires Mg(2+) as cofactor. As to expression, expressed by the venom gland.

It localises to the secreted. The catalysed reaction is an N-(acyl)-sphingosylphosphocholine = an N-(acyl)-sphingosyl-1,3-cyclic phosphate + choline. It catalyses the reaction an N-(acyl)-sphingosylphosphoethanolamine = an N-(acyl)-sphingosyl-1,3-cyclic phosphate + ethanolamine. The enzyme catalyses a 1-acyl-sn-glycero-3-phosphocholine = a 1-acyl-sn-glycero-2,3-cyclic phosphate + choline. It carries out the reaction a 1-acyl-sn-glycero-3-phosphoethanolamine = a 1-acyl-sn-glycero-2,3-cyclic phosphate + ethanolamine. In terms of biological role, dermonecrotic toxins cleave the phosphodiester linkage between the phosphate and headgroup of certain phospholipids (sphingolipid and lysolipid substrates), forming an alcohol (often choline) and a cyclic phosphate. This toxin acts on sphingomyelin (SM). It may also act on ceramide phosphoethanolamine (CPE), lysophosphatidylcholine (LPC) and lysophosphatidylethanolamine (LPE), but not on lysophosphatidylserine (LPS), and lysophosphatidylglycerol (LPG). It acts by transphosphatidylation, releasing exclusively cyclic phosphate products as second products. Induces dermonecrosis, hemolysis, increased vascular permeability, edema, inflammatory response, and platelet aggregation. This chain is Dermonecrotic toxin LlSicTox-alphaIV2iii, found in Loxosceles laeta (South American recluse spider).